The sequence spans 329 residues: DNA-directed RNA polymerase subunit alpha (329 aa).

Residues 1-235 (MQGSVTEFLK…EQLDAFVDLR (235 aa)) are alpha N-terminal domain (alpha-NTD). Positions 249-329 (FDPILLRPVD…NWPPASIAED (81 aa)) are alpha C-terminal domain (alpha-CTD).

Belongs to the RNA polymerase alpha chain family. In terms of assembly, homodimer. The RNAP catalytic core consists of 2 alpha, 1 beta, 1 beta' and 1 omega subunit. When a sigma factor is associated with the core the holoenzyme is formed, which can initiate transcription.

The enzyme catalyses RNA(n) + a ribonucleoside 5'-triphosphate = RNA(n+1) + diphosphate. In terms of biological role, DNA-dependent RNA polymerase catalyzes the transcription of DNA into RNA using the four ribonucleoside triphosphates as substrates. The chain is DNA-directed RNA polymerase subunit alpha from Photobacterium profundum (strain SS9).